We begin with the raw amino-acid sequence, 286 residues long: F-box/SPRY domain-containing protein 1 (286 aa).

An N-acetylalanine modification is found at Ala-2. An F-box domain is found at 33 to 82; the sequence is SGVGGRLPSRVLELVFSYLELSELRSCALVCKHWYRCLHGDENSEVWRSL. The B30.2/SPRY domain occupies 92 to 284; the sequence is LRTDILCNLP…VTLVYLGKPL (193 aa).

The protein belongs to the FBXO45/Fsn family. In terms of assembly, forms a complex with MYCBP2 and SKP1. Interacts with HEY1; leading to FBXO45 nuclear translocation. Interacts (via SPRY domain) with CDH2. Expressed speciffically in the central nervous system, including cerebellum, medulla oblongata, olfactory bulb, hippocampus, cortex and brain stem.

Its subcellular location is the secreted. The protein resides in the postsynaptic cell membrane. The protein localises to the presynaptic cell membrane. It is found in the nucleus. The protein operates within protein modification; protein ubiquitination. Component of E3 ubiquitin ligase complex consisting of FBXO45, MYCBP2 and SKP1. Functions in substrate recognition but plays also an important role in assembly of the complex. Required for normal neuromuscular synaptogenesis, axon pathfinding and neuronal migration. Regulates neuron migration during brain development through interaction with N-cadherin/CDH2 after secretion via a non-classical mechanism. Plays a role in the regulation of neurotransmission at mature neurons. May control synaptic activity by controlling UNC13A via ubiquitin dependent pathway. Specifically recognizes TP73, promoting its ubiquitination and degradation. Polyubiquitinates NMNAT2, an adenylyltransferase that acts as an axon maintenance factor, and regulates its stability and degradation by the proteasome. Acts also by ubiquitinating FBXW7 during prolonged mitotic arrest and promotes FBXW7 proteasomal degradation. Induces subsequently an increase in mitotic slippage and prevents mitotic cell death. In response to influenza infection, mediates interferon-lambda receptor IFNLR1 polyubiquitination and degradation through the ubiquitin-proteasome system by docking with its intracellular receptor domain. This is F-box/SPRY domain-containing protein 1 from Mus musculus (Mouse).